A 551-amino-acid chain; its full sequence is Transcription factor 7-like 1-B (551 aa).

The segment covering 1 to 11 (MPQLNSGGGDE) has biased composition (gly residues). The interaction with CTNNB1-A stretch occupies residues 1–61 (MPQLNSGGGD…SENHSSDSDS (61 aa)). 4 disordered regions span residues 1–77 (MPQL…EKPR), 183–213 (GTPP…PYYP), 391–474 (WSAR…SLTT), and 492–515 (SPSS…SRPI). Composition is skewed to basic and acidic residues over residues 17–32 (ELIR…EKSP) and 52–77 (SENH…EKPR). Residues 109-312 (LGGHYLPNGA…SPNLSTKSNV (204 aa)) form an interaction with AES and TLE4-A region. Positions 324-392 (IKKPLNAFML…LHSQLYPSWS (69 aa)) form a DNA-binding region, HMG box. A compositionally biased stretch (basic and acidic residues) spans 407–416 (KQSPEMENYT). The tract at residues 408–551 (QSPEMENYTK…PLSLVTRSSD (144 aa)) is interaction with CTBP-B. Positions 445-464 (SPATPSAALASPAAPAATHS) are enriched in low complexity. The segment covering 465 to 474 (EQAQPLSLTT) has biased composition (polar residues).

The protein belongs to the TCF/LEF family. As to quaternary structure, interacts with csnk1e, ctnnb1-A, ctbp-B, dact1-A and gsk3b. May interact with ase and tle4-A. Interacts with tle1-B. In terms of processing, phosphorylated. Phosphorylation by csnk1e promotes binding to ctnnb1-A while phosphorylation by gsk3b may reverse this effect.

The protein localises to the nucleus. Functionally, participates in the Wnt signaling pathway. Binds to DNA and acts as a repressor in the absence of ctnnb1-A and possibly ctnnb1-B, and as an activator in the presence of these proteins. Required early in development for the establishment of the dorsal body axis in response to maternal Wnt signaling. In Xenopus laevis (African clawed frog), this protein is Transcription factor 7-like 1-B (tcf7l1-b).